The sequence spans 227 residues: Cytochrome c oxidase subunit 2 (227 aa).

Topologically, residues 1–14 (MAYPFQLGLQDATS) are mitochondrial intermembrane. Residues 15 to 45 (PIMEELLHFHDHTLMIVFLISSLVLYIISLM) form a helical membrane-spanning segment. Residues 46 to 59 (LTTKLTHTSTMDAQ) lie on the Mitochondrial matrix side of the membrane. A helical membrane pass occupies residues 60-87 (EVETVWTILPAIILILIALPSLRILYMM). Residues 88 to 227 (DEINNPSLTV…YFETWSALMV (140 aa)) lie on the Mitochondrial intermembrane side of the membrane. Cu cation contacts are provided by histidine 161, cysteine 196, glutamate 198, cysteine 200, histidine 204, and methionine 207. Position 198 (glutamate 198) interacts with Mg(2+). Tyrosine 218 bears the Phosphotyrosine mark.

This sequence belongs to the cytochrome c oxidase subunit 2 family. In terms of assembly, component of the cytochrome c oxidase (complex IV, CIV), a multisubunit enzyme composed of 14 subunits. The complex is composed of a catalytic core of 3 subunits MT-CO1, MT-CO2 and MT-CO3, encoded in the mitochondrial DNA, and 11 supernumerary subunits COX4I, COX5A, COX5B, COX6A, COX6B, COX6C, COX7A, COX7B, COX7C, COX8 and NDUFA4, which are encoded in the nuclear genome. The complex exists as a monomer or a dimer and forms supercomplexes (SCs) in the inner mitochondrial membrane with NADH-ubiquinone oxidoreductase (complex I, CI) and ubiquinol-cytochrome c oxidoreductase (cytochrome b-c1 complex, complex III, CIII), resulting in different assemblies (supercomplex SCI(1)III(2)IV(1) and megacomplex MCI(2)III(2)IV(2)). Found in a complex with TMEM177, COA6, COX18, COX20, SCO1 and SCO2. Interacts with TMEM177 in a COX20-dependent manner. Interacts with COX20. Interacts with COX16. Cu cation is required as a cofactor.

The protein localises to the mitochondrion inner membrane. It catalyses the reaction 4 Fe(II)-[cytochrome c] + O2 + 8 H(+)(in) = 4 Fe(III)-[cytochrome c] + 2 H2O + 4 H(+)(out). Its function is as follows. Component of the cytochrome c oxidase, the last enzyme in the mitochondrial electron transport chain which drives oxidative phosphorylation. The respiratory chain contains 3 multisubunit complexes succinate dehydrogenase (complex II, CII), ubiquinol-cytochrome c oxidoreductase (cytochrome b-c1 complex, complex III, CIII) and cytochrome c oxidase (complex IV, CIV), that cooperate to transfer electrons derived from NADH and succinate to molecular oxygen, creating an electrochemical gradient over the inner membrane that drives transmembrane transport and the ATP synthase. Cytochrome c oxidase is the component of the respiratory chain that catalyzes the reduction of oxygen to water. Electrons originating from reduced cytochrome c in the intermembrane space (IMS) are transferred via the dinuclear copper A center (CU(A)) of subunit 2 and heme A of subunit 1 to the active site in subunit 1, a binuclear center (BNC) formed by heme A3 and copper B (CU(B)). The BNC reduces molecular oxygen to 2 water molecules using 4 electrons from cytochrome c in the IMS and 4 protons from the mitochondrial matrix. The polypeptide is Cytochrome c oxidase subunit 2 (MT-CO2) (Canis mesomelas elongae (Eastern African black-backed jackal)).